The sequence spans 314 residues: Probable cell division protein WhiA (314 aa).

The H-T-H motif DNA-binding region spans 274–308 (SLKELGEMVSTGPISKSGMNHRLRKLNELADKIRN).

Belongs to the WhiA family.

Its function is as follows. Involved in cell division and chromosome segregation. This is Probable cell division protein WhiA from Staphylococcus epidermidis (strain ATCC 35984 / DSM 28319 / BCRC 17069 / CCUG 31568 / BM 3577 / RP62A).